A 131-amino-acid polypeptide reads, in one-letter code: Holo-[acyl-carrier-protein] synthase (131 aa).

Residues aspartate 8 and glutamate 59 each contribute to the Mg(2+) site.

It belongs to the P-Pant transferase superfamily. AcpS family. It depends on Mg(2+) as a cofactor.

Its subcellular location is the cytoplasm. The enzyme catalyses apo-[ACP] + CoA = holo-[ACP] + adenosine 3',5'-bisphosphate + H(+). Functionally, transfers the 4'-phosphopantetheine moiety from coenzyme A to a Ser of acyl-carrier-protein. The chain is Holo-[acyl-carrier-protein] synthase from Rickettsia rickettsii (strain Iowa).